Reading from the N-terminus, the 640-residue chain is MSQEPATPLLDTVKTPDDLRKLAPTQLRQLADELRVEMISAVGQTGGHLGSGLGVVELTVAIHYVFNTPEDRLVWDVGHQAYPHKILTGRRDRIRTLRQAGGLSGFTKRSESEYDPFGTAHSSTSISAALGFAIANKLSGRLGKGIAVIGDGAMSAGMAYEAMNNAEAAGNRLIVILNDNDMSIAPPVGGLSAYLARLVSSGPFLGLRDIARRLSRKLPRPLHEAARKTDEFARGMAMGGTLFEELGFYYVGPIDGHNIDQLIPVLENVRDAAEGPCLIHVVTQKGKGYAPAEAAADKYHGVQKFDVITGEQVKAKAAAPAYQNVFGETLAKLADADPTICAITAAMPSGTGVDKFAKAHPDRTFDVGIAEQHAVTFAAGLAAEGMRPFCAIYSTFLQRAFDQVVHDVAIQNLPVRFAIDRAGLVGADGATHAGSFDVTYLATLPNLVVMAAADEAELVHMTYTAALHDSGPIAFRYPRGNGVGVPLPEVPERLEIGKGRIIRQGSKVALLSLGTRLAEALKAADQLDARGLSTTVADLRFAKPLDVALIRQLMTTHDVIVTVEEGSIGGLGAHVLTMASDEGLVDGGLKIRTMRLPDLFQDHDAPEKQYDEAGLNAPHIVDTVLKALRHNSAGVSEARA.

Residues H79 and A120 to S122 contribute to the thiamine diphosphate site. Residue D151 participates in Mg(2+) binding. Thiamine diphosphate is bound by residues G152–A153, N180, Y289, and E371. Residue N180 coordinates Mg(2+).

Belongs to the transketolase family. DXPS subfamily. Homodimer. It depends on Mg(2+) as a cofactor. Thiamine diphosphate serves as cofactor.

It catalyses the reaction D-glyceraldehyde 3-phosphate + pyruvate + H(+) = 1-deoxy-D-xylulose 5-phosphate + CO2. Its pathway is metabolic intermediate biosynthesis; 1-deoxy-D-xylulose 5-phosphate biosynthesis; 1-deoxy-D-xylulose 5-phosphate from D-glyceraldehyde 3-phosphate and pyruvate: step 1/1. Functionally, catalyzes the acyloin condensation reaction between C atoms 2 and 3 of pyruvate and glyceraldehyde 3-phosphate to yield 1-deoxy-D-xylulose-5-phosphate (DXP). This Novosphingobium aromaticivorans (strain ATCC 700278 / DSM 12444 / CCUG 56034 / CIP 105152 / NBRC 16084 / F199) protein is 1-deoxy-D-xylulose-5-phosphate synthase.